The following is a 1482-amino-acid chain: Glutamate receptor ionotropic, NMDA 2B (1482 aa).

An N-terminal signal peptide occupies residues 1–26 (MKPSAECCSPKFWLVLAVLAVSGSKA). Residues 27–557 (RSQKSPPSIG…SAFLEPFSAD (531 aa)) lie on the Extracellular side of the membrane. The N-linked (GlcNAc...) asparagine glycan is linked to N74. A disulfide bond links C86 and C321. 2 residues coordinate Zn(2+): H127 and E284. N-linked (GlcNAc...) asparagine glycosylation is found at N341, N348, N444, and N491. 2 disulfide bridges follow: C429-C456 and C436-C457. The L-glutamate site is built by T514 and R519. N-linked (GlcNAc...) asparagine glycosylation is present at N542. The chain crosses the membrane as a helical span at residues 558–576 (VWVMMFVMLLIVSAVAVFV). At 577–603 (FEYFSPVGYNRCLADGREPGGPSFTIG) the chain is on the cytoplasmic side. The segment at residues 604–623 (KAIWLLWGLVFNNSVPVQNP) is an intramembrane region (discontinuously helical). The segment at 604–623 (KAIWLLWGLVFNNSVPVQNP) is pore-forming. Over 624 to 630 (KGTTSKI) the chain is Cytoplasmic. The helical transmembrane segment at 631–646 (MVSVWAFFAVIFLASY) threads the bilayer. Topologically, residues 647–817 (TANLAAFMIQ…VMSSQLDIDN (171 aa)) are extracellular. N688 carries an N-linked (GlcNAc...) asparagine glycan. L-glutamate contacts are provided by S690, T691, and D732. Cysteines 746 and 801 form a disulfide. Residues 818 to 837 (MAGVFYMLGAAMALSLITFI) traverse the membrane as a helical segment. At 838 to 1482 (CEHLFYWQFR…EKLSSIESDV (645 aa)) the chain is on the cytoplasmic side. A phosphoserine mark is found at S882, S886, S917, and S920. Phosphotyrosine is present on residues Y962 and Y1039. S1058, S1061, and S1064 each carry phosphoserine. Residues Y1109 and Y1133 each carry the phosphotyrosine modification. The residue at position 1143 (S1143) is a Phosphoserine. Y1155 carries the phosphotyrosine modification. The interval 1161–1194 (DFKRDSVSGGGPCTNRSHLKHGTGEKHGVVGGVP) is disordered. S1255 and S1259 each carry phosphoserine. Positions 1269–1301 (PVAVTSNASSTKYPQSPTNSKAQKKNRNKLRRQ) are disordered. Positions 1272–1289 (VTSNASSTKYPQSPTNSK) are enriched in polar residues. Positions 1290-1301 (AQKKNRNKLRRQ) are enriched in basic residues. An interaction with DAPK1 region spans residues 1292-1304 (KKNRNKLRRQHSY). Phosphoserine is present on S1303. Y1472 bears the Phosphotyrosine mark. Positions 1480–1482 (SDV) match the PDZ-binding motif.

It belongs to the glutamate-gated ion channel (TC 1.A.10.1) family. NR2B/GRIN2B subfamily. In terms of assembly, heterotetramer. Forms heterotetrameric channels composed of two GluN1/zeta subunits (GRIN1), and two identical GluN2/epsilon subunits (GRIN2A, GRIN2B, GRIN2C or GRIN2D) or GluN3 subunits (GRIN3A or GRIN3B) (in vitro). Can also form heterotetrameric channels that contain at least two GluN1 subunits and at least two different GluN2 subunits (or a combination of one GluN2 and one GluN3 subunits) (in vitro). In vivo, the subunit composition may depend on the expression levels of the different subunits. Found in a complex with GRIN1, GRIN3A and PPP2CB. Found in a complex with GRIN1 and GRIN3B. Interacts with MAGI3. Interacts with HIP1 and NETO1. Interacts with PDZ domains of PATJ, DLG3 and DLG4. Interacts with DAPK1. Found in a complex with GRIN1 and PRR7. Interacts with PRR7. Interacts with CAMK2A. Interacts with ARC; preventing ARC oligomerization. Interacts with TMEM25. Interacts (via the extreme C-terminus) with FRMPD2 (via the second PDZ domain); the interaction is direct and is likely to promote NMDAR-mediated neural signal transmission. Interacts with FAM81A; the interaction facilitates condensate formation via liquid-liquid phase separation. In terms of processing, phosphorylated on tyrosine residues. Phosphorylation at Ser-1303 by DAPK1 enhances synaptic NMDA receptor channel activity. In terms of tissue distribution, expressed in the hippocampus including the dentate gyrus (at protein level). Detected in adult olfactory bulb, brain cortex, hippocampus, striatum, thalamus, superior colliculus, with much lower levels in inferior colliculus, midbrain and cerebellum.

It localises to the cell membrane. The protein localises to the postsynaptic cell membrane. The protein resides in the late endosome. It is found in the lysosome. Its subcellular location is the cytoplasm. It localises to the cytoskeleton. The enzyme catalyses Ca(2+)(in) = Ca(2+)(out). The catalysed reaction is Na(+)(in) = Na(+)(out). It catalyses the reaction K(+)(in) = K(+)(out). With respect to regulation, NMDA glutamate receptor activity is inhibited by micromolar levels of zinc ions. NMDA glutamate receptor activity is inhibited by ifenprodil. In terms of biological role, component of N-methyl-D-aspartate (NMDA) receptors (NMDARs) that function as heterotetrameric, ligand-gated cation channels with high calcium permeability and voltage-dependent block by Mg(2+). Participates in synaptic plasticity for learning and memory formation by contributing to the long-term depression (LTD) of hippocampus membrane currents. Channel activation requires binding of the neurotransmitter L-glutamate to the GluN2 subunit, glycine or D-serine binding to the GluN1 subunit, plus membrane depolarization to eliminate channel inhibition by Mg(2+). NMDARs mediate simultaneously the potasium efflux and the influx of calcium and sodium. Each GluN2 subunit confers differential attributes to channel properties, including activation, deactivation and desensitization kinetics, pH sensitivity, Ca2(+) permeability, and binding to allosteric modulators. In concert with DAPK1 at extrasynaptic sites, acts as a central mediator for stroke damage. Its phosphorylation at Ser-1303 by DAPK1 enhances synaptic NMDA receptor channel activity inducing injurious Ca2+ influx through them, resulting in an irreversible neuronal death. In Rattus norvegicus (Rat), this protein is Glutamate receptor ionotropic, NMDA 2B.